A 255-amino-acid chain; its full sequence is Microfibril-associated glycoprotein 4 (255 aa).

A signal peptide spans 1–20 (MEALLVLPLLLLLSAGPCAP). The Cell attachment site motif lies at 26–28 (RGD). The Fibrinogen C-terminal domain maps to 32–255 (KSCLQLPLDC…KRTEMKIRRA (224 aa)). Residues Asn87 and Asn137 are each glycosylated (N-linked (GlcNAc...) asparagine).

As to quaternary structure, homodimer. Can also form higher oligomers. Interacts with FBN1, FBN2 and LOX. Interacts with COL1A1 in a Ca (2+)-dependent manner. Interacts with ELN in a Ca (2+)-dependent manner; this interaction promotes ELN self-assembly.

It is found in the secreted. Its subcellular location is the extracellular space. The protein localises to the extracellular matrix. Could be involved in calcium-dependent cell adhesion or intercellular interactions. May contribute to the elastic fiber assembly and/or maintenance. In Bos taurus (Bovine), this protein is Microfibril-associated glycoprotein 4 (MFAP4).